Consider the following 97-residue polypeptide: Large ribosomal subunit protein bL25 (97 aa).

Belongs to the bacterial ribosomal protein bL25 family. As to quaternary structure, part of the 50S ribosomal subunit; part of the 5S rRNA/L5/L18/L25 subcomplex. Contacts the 5S rRNA. Binds to the 5S rRNA independently of L5 and L18.

This is one of the proteins that binds to the 5S RNA in the ribosome where it forms part of the central protuberance. This chain is Large ribosomal subunit protein bL25, found in Blochmanniella pennsylvanica (strain BPEN).